The following is a 320-amino-acid chain: Sensor histidine kinase YbdK (320 aa).

A helical membrane pass occupies residues 1–21; the sequence is MLLFTAVISVPMLLLAVSVLM. At 22–41 the chain is on the extracellular side; that stretch reads SVIYDSMFKPMNHGMPFHRS. The helical transmembrane segment at 42–62 threads the bilayer; it reads FAYPAMIVVFLISLLLLAFLF. At 63 to 320 the chain is on the cytoplasmic side; it reads SKSIHSLLHK…NGTGFLFSKE (258 aa). Positions 67 to 120 constitute an HAMP domain; that stretch reads HSLLHKINLLNQTIRHLASDQRVPDKIEVKRADEIGELIKSVNLLIERTTYREL. Positions 135-320 constitute a Histidine kinase domain; that stretch reads KLRHDINTPL…NGTGFLFSKE (186 aa). Phosphohistidine; by autocatalysis is present on histidine 138.

Its subcellular location is the cell membrane. It carries out the reaction ATP + protein L-histidine = ADP + protein N-phospho-L-histidine.. In terms of biological role, member of the two-component regulatory system YbdK/YbdJ. Probably activates YbdJ by phosphorylation. This chain is Sensor histidine kinase YbdK (ybdK), found in Bacillus subtilis (strain 168).